The sequence spans 173 residues: NADH-ubiquinone oxidoreductase chain 6 (173 aa).

Transmembrane regions (helical) follow at residues 1 to 21 (MTYFVLFLGLCFVLGGLAVAS), 27 to 47 (YGVVGLVLASVAGCGWLLSLG), 48 to 68 (VSFVSLVLFMVYLGGMLVVFV), 85 to 105 (WGVVGYGVGFVVVLVAGLIVG), 106 to 126 (GSIGSLDFGVVTVDSVGMFSV), and 139 to 159 (CGVGMLLVAGWGLLLTLFVVL).

Belongs to the complex I subunit 6 family.

It is found in the mitochondrion membrane. The catalysed reaction is a ubiquinone + NADH + 5 H(+)(in) = a ubiquinol + NAD(+) + 4 H(+)(out). In terms of biological role, core subunit of the mitochondrial membrane respiratory chain NADH dehydrogenase (Complex I) that is believed to belong to the minimal assembly required for catalysis. Complex I functions in the transfer of electrons from NADH to the respiratory chain. The immediate electron acceptor for the enzyme is believed to be ubiquinone. The polypeptide is NADH-ubiquinone oxidoreductase chain 6 (MT-ND6) (Aethia psittacula (Parakeet auklet)).